Reading from the N-terminus, the 269-residue chain is Hemin import ATP-binding protein HmuV (269 aa).

One can recognise an ABC transporter domain in the interval 2-242; sequence LEVIHTGLNI…AMVEACFDLP (241 aa). ATP is bound at residue 34–41; that stretch reads GPNGAGKS.

Belongs to the ABC transporter superfamily. Heme (hemin) importer (TC 3.A.1.14.5) family. As to quaternary structure, the complex is composed of two ATP-binding proteins (HmuV), two transmembrane proteins (HmuU) and a solute-binding protein (HmuT).

It localises to the cell inner membrane. In terms of biological role, part of the ABC transporter complex HmuTUV involved in hemin import. Responsible for energy coupling to the transport system. In Methylobacillus flagellatus (strain ATCC 51484 / DSM 6875 / VKM B-1610 / KT), this protein is Hemin import ATP-binding protein HmuV.